The sequence spans 158 residues: MRAVIQRVKAAKVTVLDELVSSIGPGLCVLVGIKASDTAKDVEYLVRKILALRLFEEEGKRWQKSVKDLNLELLCVSQFTLYHRLKGNKPDFLAAMKGEEAQELYNQFLDRLGQSYDSTKIKDGKFGAYMQVHIENDGPVTINLESPEQKDTDREVDK.

The Gly-cisPro motif, important for rejection of L-amino acids motif lies at 138 to 139 (GP).

The protein belongs to the DTD family. In terms of assembly, homodimer.

The protein localises to the cytoplasm. The enzyme catalyses glycyl-tRNA(Ala) + H2O = tRNA(Ala) + glycine + H(+). It catalyses the reaction a D-aminoacyl-tRNA + H2O = a tRNA + a D-alpha-amino acid + H(+). Its function is as follows. An aminoacyl-tRNA editing enzyme that deacylates mischarged D-aminoacyl-tRNAs. Hydrolyzes correctly charged, achiral, glycyl-tRNA(Gly). Deacylates mischarged endogenous and E.coli glycyl-tRNA(Ala), protecting cells against glycine mischarging by AlaRS. Acts via tRNA-based rather than protein-based catalysis; rejects L-amino acids rather than detecting D-amino acids in the active site. By recycling D-aminoacyl-tRNA to D-amino acids and free tRNA molecules, this enzyme counteracts the toxicity associated with the formation of D-aminoacyl-tRNA entities in vivo and helps enforce protein L-homochirality. In Drosophila melanogaster (Fruit fly), this protein is D-aminoacyl-tRNA deacylase.